The sequence spans 624 residues: Chaperone protein HtpG (624 aa).

The interval 1 to 336 (MKGQETRGFQ…SSDLSLNVSR (336 aa)) is a; substrate-binding. The interval 337–552 (EILQDSTVTR…ADEMSTQMAK (216 aa)) is b. The c stretch occupies residues 553–624 (LFAAAGQKVP…IRRMNQLLVS (72 aa)).

Belongs to the heat shock protein 90 family. Homodimer.

It is found in the cytoplasm. Its function is as follows. Molecular chaperone. Has ATPase activity. The protein is Chaperone protein HtpG of Shigella dysenteriae serotype 1 (strain Sd197).